The sequence spans 576 residues: MEQVDSSTELHLNRKDLAALAEDVVKEEVILESSSHHHHHHHHQLDTKVRMVTSSSNDNSGSGGASGGTSGAGGGNGGGGVVSVPVSLPIGSMITGTTFNVITPDQLPPHFKPMLCVDNNGYLSGSTVSMGNDLKTIVIQQQQTQPGGGGGGANNAGTNTTATNTIGLNHDGSGSNNSHDSLATLEHAAGGASGVGGGGGGTGGGSSGWSENPSTQHNEVFQIRCKTTCAELYRSKLGSGGRGRCVKYKDKWHTPSEFEHVCGRGSSKDWKRSIKYGGKSLQSLIDEGTLTPHATNCSCTVCCDDEAGESASGPVRLFTPYKRRKRNQTDLDMESGPKRKRNTHHSNNNNSNTNNNNTSGSGANNCVDVTAAVAAATASVVDENNMFLSEENITSKDEPWAALNDSLDTSTELVDQSQMGNTYERETFVVNINDGSSIAVLDTSQSMKNIEHVYCTMVKATNDFKRMLNDMKQSFERRIEVLQKERDAAVSAMRVQVHADIDDPNISGSLHGNEIISAKKCANCNREALAECSLCRKTPYCSEFCQRKDWNAHQVECTRNPQTTTQQVMLLIDDQS.

3 disordered regions span residues 52–76, 189–215, and 309–362; these read VTSS…GGGN, AGGA…NPST, and ESAS…SGSG. Composition is skewed to gly residues over residues 61–76 and 191–207; these read GSGG…GGGN and GASG…GGSS. In terms of domain architecture, SAND spans 210 to 291; the sequence is SENPSTQHNE…QSLIDEGTLT (82 aa). The Nuclear localization signal signature appears at 324–340; that stretch reads RKRNQTDLDMESGPKRK. Low complexity predominate over residues 345 to 362; the sequence is HSNNNNSNTNNNNTSGSG. Zn(2+) contacts are provided by C521, C524, C532, C535, C541, C545, H553, and C557. Residues 521–557 form an MYND-type zinc finger; the sequence is CANCNREALAECSLCRKTPYCSEFCQRKDWNAHQVEC.

Its subcellular location is the nucleus. In terms of biological role, transcription factor that binds the homeotic Deformed (Dfd) response element. High affinity binding sites contain at least 1 TTCG motif surrounded by additional TCG sequences. May be involved in the selective action of Dfd on these sites without binding directly to the Dfd protein. Requirement of DEAF1 activity may be a common feature of enhancers targeted by Dfd. The sequence is that of Deformed epidermal autoregulatory factor 1 (Deaf1) from Drosophila melanogaster (Fruit fly).